The sequence spans 249 residues: UPF0696 protein C11orf68 homolog (249 aa).

The protein belongs to the UPF0696 family.

The sequence is that of UPF0696 protein C11orf68 homolog from Danio rerio (Zebrafish).